The chain runs to 857 residues: DNA mismatch repair protein MutS (857 aa).

ATP is bound at residue 603–610 (GPNMAGKS).

Belongs to the DNA mismatch repair MutS family.

This protein is involved in the repair of mismatches in DNA. It is possible that it carries out the mismatch recognition step. This protein has a weak ATPase activity. The polypeptide is DNA mismatch repair protein MutS (Methanothrix thermoacetophila (strain DSM 6194 / JCM 14653 / NBRC 101360 / PT) (Methanosaeta thermophila)).